The chain runs to 212 residues: Large ribosomal subunit protein uL3 (212 aa).

Polar residues predominate over residues 139–153; that stretch reads LSHRVTGSIGQNQTP. Positions 139–161 are disordered; it reads LSHRVTGSIGQNQTPGKVFKGKK. Position 151 is an N5-methylglutamine (glutamine 151).

This sequence belongs to the universal ribosomal protein uL3 family. As to quaternary structure, part of the 50S ribosomal subunit. Forms a cluster with proteins L14 and L19. Methylated by PrmB.

Its function is as follows. One of the primary rRNA binding proteins, it binds directly near the 3'-end of the 23S rRNA, where it nucleates assembly of the 50S subunit. The polypeptide is Large ribosomal subunit protein uL3 (Baumannia cicadellinicola subsp. Homalodisca coagulata).